Consider the following 512-residue polypeptide: Monocarboxylate transporter 10 (512 aa).

Residues 1-44 (MVPSQEEPAAERETNEAQPPGPAPSDDAPLPGPGPSDVSDVAAE) form a disordered region. The Cytoplasmic portion of the chain corresponds to 1 to 63 (MVPSQEEPAA…AGSEPPVPPE (63 aa)). Residues 64–84 (GGWGWLVMLAAMWCNGSVFGI) traverse the membrane as a helical segment. The Extracellular segment spans residues 85–111 (QNAYGVLFVSMLDTFKAKDDDNMAFKT). A helical transmembrane segment spans residues 112–132 (AWVGSLSMGMIFFCCPIVSVF). The Cytoplasmic portion of the chain corresponds to 133–141 (TDMFGCRRT). The helical transmembrane segment at 142 to 162 (AVVGAAVGFIGLMSSSFVSSI) threads the bilayer. Over 163–168 (EPLYLT) the chain is Extracellular. The helical transmembrane segment at 169–189 (YGIIFACGCSFAYQPSLVILG) threads the bilayer. Over 190 to 201 (HYFKKRLGLVNG) the chain is Cytoplasmic. Residues 202–222 (IVTAGSSVFTILLPLLLGNLI) traverse the membrane as a helical segment. Over 223 to 232 (SSVKLFNTLR) the chain is Extracellular. Residues 233 to 253 (ILCIFMFVLFLAGFTYRPLVP) form a helical membrane-spanning segment. At 254–291 (STKEKESGGSRSSFFSRRKLSPPKKVFNFALFKETTYA) the chain is on the cytoplasmic side. Phosphoserine is present on Ser260. The chain crosses the membrane as a helical span at residues 292 to 312 (VWAAGIPLALFGYFVPYVHLM). Topologically, residues 313-326 (NHVKERFQDVNNKE) are extracellular. A helical transmembrane segment spans residues 327–347 (VLFMCIGITSGVGRLLFGRIA). The Cytoplasmic segment spans residues 348-362 (DYLPGVKKVYLQVLS). Residues 363–383 (FFFIGLMSMMIPLCSAFGALI) traverse the membrane as a helical segment. Residue Ala384 is a topological domain, extracellular. The chain crosses the membrane as a helical span at residues 385 to 405 (VCLAMGLFDGCFISIMAPIAF). Residues 406 to 416 (ELVGPQDASQA) are Cytoplasmic-facing. A helical transmembrane segment spans residues 417–437 (IGFLLGFMSIPMTVGPPIAGL). Topologically, residues 438–448 (LHDKLGTYDVA) are extracellular. A helical transmembrane segment spans residues 449-469 (FYLAGIPPFVGGVVLCLIPWI). The Cytoplasmic portion of the chain corresponds to 470 to 512 (HSKKQRKISKNAGGEKMEKMLENQSSLLSGSSGIFKKDSASII). Ser495, Ser498, Ser500, and Ser501 each carry phosphoserine.

It belongs to the major facilitator superfamily. Monocarboxylate porter (TC 2.A.1.13) family. In terms of processing, not N-glycosylated. In terms of tissue distribution, highly expressed in small intestine, particularly in jejunum and ileum, scarcely in colon and substantially in kidney, liver and skeletal muscle. In the brain expression is low and appears to be restricted to a subset of neurons, microglia cells, and oligodendrocytes.

The protein localises to the cell membrane. It is found in the basolateral cell membrane. The catalysed reaction is L-tryptophan(in) = L-tryptophan(out). It carries out the reaction L-tyrosine(in) = L-tyrosine(out). The enzyme catalyses L-phenylalanine(in) = L-phenylalanine(out). It catalyses the reaction 3,3',5-triiodo-L-thyronine(out) = 3,3',5-triiodo-L-thyronine(in). The catalysed reaction is L-thyroxine(out) = L-thyroxine(in). In terms of biological role, sodium- and proton-independent thyroid hormones and aromatic acids transporter. Mediates both uptake and efflux of 3,5,3'-triiodothyronine (T3) and 3,5,3',5'-tetraiodothyronine (T4) with high affinity, suggesting a role in the homeostasis of thyroid hormone levels. Responsible for low affinity bidirectional transport of the aromatic amino acids, such as phenylalanine, tyrosine, tryptophan and L-3,4-dihydroxyphenylalanine (L-dopa). Plays an important role in homeostasis of aromatic amino acids. The polypeptide is Monocarboxylate transporter 10 (Slc16a10) (Mus musculus (Mouse)).